Here is a 132-residue protein sequence, read N- to C-terminus: Large ribosomal subunit protein uL14 (132 aa).

This sequence belongs to the universal ribosomal protein uL14 family. In terms of assembly, the L3/L14/L24e cluster may contact the 16S rRNA in 2 intersubunit bridges. Part of the 50S ribosomal subunit. Forms a cluster with proteins L3 and L24e.

Functionally, forms part of two intersubunit bridges in the 70S ribosome. Binds to 23S rRNA. In Haloarcula marismortui (strain ATCC 43049 / DSM 3752 / JCM 8966 / VKM B-1809) (Halobacterium marismortui), this protein is Large ribosomal subunit protein uL14.